Here is a 468-residue protein sequence, read N- to C-terminus: Peroxisome proliferator-activated receptor alpha (468 aa).

Positions 99–173 (NIECRICGDK…VGMSHNAIRF (75 aa)) form a DNA-binding region, nuclear receptor. NR C4-type zinc fingers lie at residues 102-122 (CRIC…CEGC) and 139-161 (CDRS…FHKC). One can recognise an NR LBD domain in the interval 239–466 (FVIHDMETLC…HPLLQEIYRD (228 aa)). The indeglitazar site is built by S280, Y314, and Y464. The interval 304 to 433 (DQVTLLKYGV…PKLLQKMADL (130 aa)) is required for heterodimerization with RXRA.

Belongs to the nuclear hormone receptor family. NR1 subfamily. In terms of assembly, heterodimer; with RXRA. This heterodimerization is required for DNA binding and transactivation activity. Interacts with NCOA3 coactivator. Interacts with CITED2; the interaction stimulates its transcriptional activity. Also interacts with PPARBP in vitro. Interacts with AKAP13, LPIN1, PRDM16 and coactivator NCOA6. Interacts with ASXL1 and ASXL2. Interacts with PER2. Interacts with SIRT1; the interaction seems to be modulated by NAD(+) levels. Interacts with CRY1 and CRY2. In hepatocytes, interacts with PAQR3 and HUWE1; the interactions promote PPARA poylubiquitination and HUWE1-mediated degradation. Post-translationally, ubiquitinated by E3 ubiquitin-protein ligase HUWE1; leading to proteasomal degradation. In terms of processing, phosphorylated. Skeletal muscle, liver, heart and kidney. Expressed in monocytes.

It is found in the nucleus. In terms of biological role, ligand-activated transcription factor. Key regulator of lipid metabolism. Activated by the endogenous ligand 1-palmitoyl-2-oleoyl-sn-glycerol-3-phosphocholine (16:0/18:1-GPC). Activated by oleylethanolamide, a naturally occurring lipid that regulates satiety. Receptor for peroxisome proliferators such as hypolipidemic drugs and fatty acids. Regulates the peroxisomal beta-oxidation pathway of fatty acids. Functions as a transcription activator for the ACOX1 and P450 genes. Transactivation activity requires heterodimerization with RXRA and is antagonized by NR2C2. May be required for the propagation of clock information to metabolic pathways regulated by PER2. The chain is Peroxisome proliferator-activated receptor alpha (PPARA) from Homo sapiens (Human).